A 106-amino-acid polypeptide reads, in one-letter code: Nucleoid-associated protein Abu_0429 (106 aa).

The protein belongs to the YbaB/EbfC family. In terms of assembly, homodimer.

The protein resides in the cytoplasm. It is found in the nucleoid. In terms of biological role, binds to DNA and alters its conformation. May be involved in regulation of gene expression, nucleoid organization and DNA protection. The chain is Nucleoid-associated protein Abu_0429 from Aliarcobacter butzleri (strain RM4018) (Arcobacter butzleri).